The chain runs to 274 residues: Probable formate transporter (274 aa).

Helical transmembrane passes span Ile31–Val51, Ala62–Ile82, Val118–Leu138, Ala176–Ala196, Ile200–Glu220, Met226–Asn246, and Leu248–Trp268.

Belongs to the FNT transporter (TC 1.A.16) family.

The protein localises to the cell membrane. In terms of biological role, may act as a formate transporter. The polypeptide is Probable formate transporter (fdhC) (Methanothermobacter thermautotrophicus (Methanobacterium thermoformicicum)).